Consider the following 286-residue polypeptide: Bifunctional protein FolD (286 aa).

Residues 166–168 (GAS) and Ile-232 each bind NADP(+).

This sequence belongs to the tetrahydrofolate dehydrogenase/cyclohydrolase family. In terms of assembly, homodimer.

It catalyses the reaction (6R)-5,10-methylene-5,6,7,8-tetrahydrofolate + NADP(+) = (6R)-5,10-methenyltetrahydrofolate + NADPH. It carries out the reaction (6R)-5,10-methenyltetrahydrofolate + H2O = (6R)-10-formyltetrahydrofolate + H(+). It participates in one-carbon metabolism; tetrahydrofolate interconversion. Catalyzes the oxidation of 5,10-methylenetetrahydrofolate to 5,10-methenyltetrahydrofolate and then the hydrolysis of 5,10-methenyltetrahydrofolate to 10-formyltetrahydrofolate. The sequence is that of Bifunctional protein FolD from Shewanella woodyi (strain ATCC 51908 / MS32).